Consider the following 374-residue polypeptide: MPQTIVVKIGTSSLTDPKTGMLALATIGTLVETLTRLKQKGHRVILVSSGAVGVGCGVLKRSERPKKIAEKQAIAAVGQGRLIRLYDDLFTSLQQAIAQVLLTRRDLVDRTSYLTVQEALNAMLDLSVIPIVNENDTVAVDELKFGDNDTLSALVASLVNADWLVLLTDVDRLYSADPRQNPDARPIPLVSSSELFNLQVDAGSSGSQWGTGGMQTKLTAARIATSAGVRTVITQGKTPQNLLKIVAGEDIGTHFEAQPQADNARKRWIAYGLVPQGILTLDDGATQALLKNGRSLLAAGIVAVEGEFTINDPVELRTQTGQAIARGLVNYNHQDIEKIQGQHSTQIRQILGYGSADTVIHRDNLALLIAAEGI.

ATP is bound at residue lysine 8. Serine 49, aspartate 136, and asparagine 148 together coordinate substrate. Residues 168–169 (TD) and 211–217 (TGGMQTK) contribute to the ATP site. A PUA domain is found at 276–354 (QGILTLDDGA…TQIRQILGYG (79 aa)).

The protein belongs to the glutamate 5-kinase family.

The protein resides in the cytoplasm. It carries out the reaction L-glutamate + ATP = L-glutamyl 5-phosphate + ADP. Its pathway is amino-acid biosynthesis; L-proline biosynthesis; L-glutamate 5-semialdehyde from L-glutamate: step 1/2. Its function is as follows. Catalyzes the transfer of a phosphate group to glutamate to form L-glutamate 5-phosphate. This is Glutamate 5-kinase from Picosynechococcus sp. (strain ATCC 27264 / PCC 7002 / PR-6) (Agmenellum quadruplicatum).